We begin with the raw amino-acid sequence, 80 residues long: Putative ankyrin repeat protein RC0877 (80 aa).

An ANK repeat occupies 6-46 (SGGIPLHAVAKNVRCTSKDIKDYEIYKLLVSYGADINARVE).

This is Putative ankyrin repeat protein RC0877 from Rickettsia conorii (strain ATCC VR-613 / Malish 7).